The sequence spans 1133 residues: DNA-directed RNA polymerase subunit beta (1133 aa).

Positions 1085-1133 (ADVSSRHTPSRPTYESVTSEDLSPAAGGTFTLARRSREEDEDREEEDDF) are disordered. Positions 1090-1105 (RHTPSRPTYESVTSED) are enriched in polar residues. Positions 1123 to 1133 (EDEDREEEDDF) are enriched in acidic residues.

This sequence belongs to the RNA polymerase beta chain family. In cyanobacteria the RNAP catalytic core is composed of 2 alpha, 1 beta, 1 beta', 1 gamma and 1 omega subunit. When a sigma factor is associated with the core the holoenzyme is formed, which can initiate transcription.

It catalyses the reaction RNA(n) + a ribonucleoside 5'-triphosphate = RNA(n+1) + diphosphate. Functionally, DNA-dependent RNA polymerase catalyzes the transcription of DNA into RNA using the four ribonucleoside triphosphates as substrates. In Synechococcus sp. (strain JA-3-3Ab) (Cyanobacteria bacterium Yellowstone A-Prime), this protein is DNA-directed RNA polymerase subunit beta.